A 714-amino-acid chain; its full sequence is MARAGSCGGAAAGAGRPEPWELSLEEVLKAYEQPLNEEQAWAVCFQGCRGLRGSPGRRLRDTGDLLLRGDGSVGAREPEAAEPATMVVPLASSEAQTVQSLGFAIYRALDWGLDESEERELSPQLERLIDLMANNDSEDSGCGAADEGYGGPEEEEEAEGVPRSVRTFAQAMRLCAARLTDPRGAQAHYQAVCRALFVETLELRAFLARVREAKEMLQKLREDEPHLETPRAELDSLGHTDWARLWVQLMRELRRGVKLKKVQEQEFNPLPTEFQLTPFEMLMQDIRARNYKLRKVMVDGDIPPRVKKDAHELILDFIRSRPPLKQVSERRLRPLPPKQRSLHEKILEEIKQERRLRPVRGEGWAARGFGSLPCILNACSGDAKSTSCINLSVTDAGGSAQRPRPRVLLKAPTLAEMEEMNTSEEEESPCGEVTLKRDRSFSEHDLAQLRSEVASGLQSATHPPGGTEPPRPRAGSAHVWRPGSRDQGTCPASVSDPSHPLLSNRGSSGDRPEASMTPDAKHLWLEFSHPVESLALTVEEVMDVRRVLVKAEMEKFLQNKELFSSLKKGKICCCCRAKFPLFSWPPSCLFCKRAVCTSCSIKMKMPSKKFGHIPVYTLGFESPQRVSAAKTAPIQRRDIFQSLQGPQWQSVEEAFPHIYSHGCVLKDVCSECTSFVADVVRSSRKSVDVLNTTPRRSRQTQSLYIPNTRTLDFK.

Positions 22-203 (LSLEEVLKAY…RALFVETLEL (182 aa)) constitute a KIND domain. The disordered stretch occupies residues 136–162 (DSEDSGCGAADEGYGGPEEEEEAEGVP). 3 WH2 domains span residues 248 to 262 (QLMR…LKKV), 278 to 296 (PFEM…LRKV), and 342 to 359 (LHEK…LRPV). A phosphoserine mark is found at Ser-371, Ser-440, Ser-442, and Ser-476. The segment at 453–516 (VASGLQSATH…SSGDRPEASM (64 aa)) is disordered. The span at 486–496 (DQGTCPASVSD) shows a compositional bias: polar residues. The segment at 534-554 (LALTVEEVMDVRRVLVKAEME) is spir-box.

The protein belongs to the spire family.

It is found in the cytoplasm. The protein resides in the cytoskeleton. It localises to the cytosol. Its subcellular location is the cell membrane. The protein localises to the cytoplasmic vesicle membrane. Acts as an actin nucleation factor, remains associated with the slow-growing pointed end of the new filament. Involved in intracellular vesicle transport along actin fibers, providing a novel link between actin cytoskeleton dynamics and intracellular transport. Required for asymmetric spindle positioning and asymmetric cell division during meiosis. Required for normal formation of the cleavage furrow and for polar body extrusion during female germ cell meiosis. Also acts in the nucleus: together with SPIRE1 and SPIRE2, promotes assembly of nuclear actin filaments in response to DNA damage in order to facilitate movement of chromatin and repair factors after DNA damage. In Homo sapiens (Human), this protein is Protein spire homolog 2 (SPIRE2).